Consider the following 408-residue polypeptide: Indian hedgehog protein (408 aa).

The N-terminal stretch at 1 to 23 (MKPARLLLLLSGCALLLAPAVRC) is a signal peptide. Cys-24 carries N-palmitoyl cysteine lipidation. Positions 90, 91, 96, 126, 127, 130, and 132 each coordinate Ca(2+). Residues His-141, Asp-148, and His-183 each coordinate Zn(2+). Gly-198 is lipidated: Cholesterol glycine ester.

Belongs to the hedgehog family. Multimer. As to quaternary structure, interacts with BOC and CDON. Interacts with PTCH1. Interacts with glypican GPC3. Post-translationally, cholesterylation is required for N-product targeting to lipid rafts and multimerization. The C-terminal domain displays an autoproteolysis activity and a cholesterol transferase activity. Both activities result in the cleavage of the full-length protein and covalent attachment of a cholesterol moiety to the C-terminal of the newly generated N-product. The N-product is the active species in both local and long-range signaling, whereas the C-product is degraded in the endoplasmic reticulum. In terms of processing, N-palmitoylation by HHAT of N-product is required for indian hedgehog protein N-product multimerization and full activity. In terms of tissue distribution, expressed in developing midgut, lung and cartilage of developing long bones in the limb.

It is found in the cell membrane. The protein localises to the endoplasmic reticulum membrane. Its subcellular location is the golgi apparatus membrane. It localises to the secreted. It catalyses the reaction glycyl-L-cysteinyl-[protein] + cholesterol + H(+) = [protein]-C-terminal glycyl cholesterol ester + N-terminal L-cysteinyl-[protein]. In terms of biological role, plays a role in embryonic morphogenesis; it is involved in the regulation of endochondral skeleton formation, and the development of retinal pigment epithelium (RPE), photoreceptors and periocular tissues. Its function is as follows. The C-terminal part of the indian hedgehog protein precursor displays an autoproteolysis and a cholesterol transferase activity. Both activities result in the cleavage of the full-length protein into two parts followed by the covalent attachment of a cholesterol moiety to the C-terminal of the newly generated N-product. Both activities occur in the endoplasmic reticulum. The dually lipidated indian hedgehog protein N-product is a morphogen which is essential for a variety of patterning events during development. Binds to the patched (PTCH1) receptor, which functions in association with smoothened (SMO), to activate the transcription of target genes. Plays a role in morphogenesis of the skeleton by coordinating growth and differentiation of the endochondral skeleton. Positively regulates PTHLH expression during endochondral bone formation preventing chondrocyte hypertrophy. In contrast, participates in normal chondrocyte proliferation in a PTHLH-independent pathway. The sequence is that of Indian hedgehog protein from Gallus gallus (Chicken).